Consider the following 613-residue polypeptide: tRNA 5-methylaminomethyl-2-thiouridine biosynthesis bifunctional protein MnmC (613 aa).

Residues 1–225 (MKKAKLIFKD…KREMIKAYLE (225 aa)) are tRNA (mnm(5)s(2)U34)-methyltransferase. Residues 252 to 613 (IGAGISSAVL…FLIRKLKKGL (362 aa)) are FAD-dependent cmnm(5)s(2)U34 oxidoreductase.

It in the N-terminal section; belongs to the methyltransferase superfamily. tRNA (mnm(5)s(2)U34)-methyltransferase family. The protein in the C-terminal section; belongs to the DAO family. FAD is required as a cofactor.

The protein localises to the cytoplasm. It carries out the reaction 5-aminomethyl-2-thiouridine(34) in tRNA + S-adenosyl-L-methionine = 5-methylaminomethyl-2-thiouridine(34) in tRNA + S-adenosyl-L-homocysteine + H(+). Catalyzes the last two steps in the biosynthesis of 5-methylaminomethyl-2-thiouridine (mnm(5)s(2)U) at the wobble position (U34) in tRNA. Catalyzes the FAD-dependent demodification of cmnm(5)s(2)U34 to nm(5)s(2)U34, followed by the transfer of a methyl group from S-adenosyl-L-methionine to nm(5)s(2)U34, to form mnm(5)s(2)U34. This Campylobacter jejuni subsp. jejuni serotype O:6 (strain 81116 / NCTC 11828) protein is tRNA 5-methylaminomethyl-2-thiouridine biosynthesis bifunctional protein MnmC.